The sequence spans 239 residues: Ribose-5-phosphate isomerase A (239 aa).

Substrate contacts are provided by residues 40-43 (SGST), 96-99 (DGAD), and 110-113 (KGGG). Residue Glu119 is the Proton acceptor of the active site. Lys137 is a substrate binding site.

It belongs to the ribose 5-phosphate isomerase family. Homodimer.

The catalysed reaction is aldehydo-D-ribose 5-phosphate = D-ribulose 5-phosphate. It functions in the pathway carbohydrate degradation; pentose phosphate pathway; D-ribose 5-phosphate from D-ribulose 5-phosphate (non-oxidative stage): step 1/1. Functionally, catalyzes the reversible conversion of ribose-5-phosphate to ribulose 5-phosphate. In Methanococcus maripaludis (strain C6 / ATCC BAA-1332), this protein is Ribose-5-phosphate isomerase A.